A 556-amino-acid polypeptide reads, in one-letter code: Formate--tetrahydrofolate ligase 1 (556 aa).

Position 65-72 (65-72 (TPAGEGKS)) interacts with ATP.

The protein belongs to the formate--tetrahydrofolate ligase family.

It catalyses the reaction (6S)-5,6,7,8-tetrahydrofolate + formate + ATP = (6R)-10-formyltetrahydrofolate + ADP + phosphate. The protein operates within one-carbon metabolism; tetrahydrofolate interconversion. The polypeptide is Formate--tetrahydrofolate ligase 1 (Streptococcus pyogenes serotype M1).